The primary structure comprises 144 residues: Small ribosomal subunit protein bS6 (144 aa).

The disordered stretch occupies residues 99–144 (KASPLAPCEEKGEEGKAEDAADELTTFGMADDDDLGDDDDTVEAGI). Basic and acidic residues predominate over residues 106 to 117 (CEEKGEEGKAED). Residues 128–144 (ADDDDLGDDDDTVEAGI) are compositionally biased toward acidic residues.

It belongs to the bacterial ribosomal protein bS6 family.

In terms of biological role, binds together with bS18 to 16S ribosomal RNA. This is Small ribosomal subunit protein bS6 from Magnetococcus marinus (strain ATCC BAA-1437 / JCM 17883 / MC-1).